Reading from the N-terminus, the 421-residue chain is Serine--tRNA ligase (421 aa).

229-231 lines the L-serine pocket; it reads TSE. 260-262 is a binding site for ATP; sequence RRE. E283 lines the L-serine pocket. 347 to 350 contacts ATP; the sequence is EISS. S381 is a binding site for L-serine.

Belongs to the class-II aminoacyl-tRNA synthetase family. Type-1 seryl-tRNA synthetase subfamily. Homodimer. The tRNA molecule binds across the dimer.

It is found in the cytoplasm. It catalyses the reaction tRNA(Ser) + L-serine + ATP = L-seryl-tRNA(Ser) + AMP + diphosphate + H(+). The enzyme catalyses tRNA(Sec) + L-serine + ATP = L-seryl-tRNA(Sec) + AMP + diphosphate + H(+). It participates in aminoacyl-tRNA biosynthesis; selenocysteinyl-tRNA(Sec) biosynthesis; L-seryl-tRNA(Sec) from L-serine and tRNA(Sec): step 1/1. Its function is as follows. Catalyzes the attachment of serine to tRNA(Ser). Is also able to aminoacylate tRNA(Sec) with serine, to form the misacylated tRNA L-seryl-tRNA(Sec), which will be further converted into selenocysteinyl-tRNA(Sec). This is Serine--tRNA ligase from Fusobacterium nucleatum subsp. nucleatum (strain ATCC 25586 / DSM 15643 / BCRC 10681 / CIP 101130 / JCM 8532 / KCTC 2640 / LMG 13131 / VPI 4355).